Here is a 147-residue protein sequence, read N- to C-terminus: Large ribosomal subunit protein uL15 (147 aa).

The segment at Met-1–Thr-58 is disordered. The span at Ser-42 to Gly-52 shows a compositional bias: gly residues.

The protein belongs to the universal ribosomal protein uL15 family. As to quaternary structure, part of the 50S ribosomal subunit.

Functionally, binds to the 23S rRNA. The sequence is that of Large ribosomal subunit protein uL15 from Caldicellulosiruptor saccharolyticus (strain ATCC 43494 / DSM 8903 / Tp8T 6331).